The primary structure comprises 495 residues: UDP-glycosyltransferase 73C6 (495 aa).

UDP-alpha-D-glucose-binding positions include Ser-296, Ser-356–Gln-358, His-373–Glu-381, and Phe-395–Gln-398. Residues Ser-449–Ser-475 form a disordered region. The segment covering Asp-450 to Glu-471 has biased composition (basic and acidic residues).

Belongs to the UDP-glycosyltransferase family. Expressed in leaves and flowers, and at a very low level in roots.

In terms of biological role, acts as a UDP-glucose:flavonol-3-O-glycoside-7-O-glucosyltransferase. 6- and 7-hydroxyflavone, but not 3- or 5-hydroxyflavone are accepted as substrates. Possesses low quercetin 3-O-glucosyltransferase, 7-O-glucosyltransferase and 4'-O-glucosyltransferase activities in vitro. This chain is UDP-glycosyltransferase 73C6 (UGT73C6), found in Arabidopsis thaliana (Mouse-ear cress).